Consider the following 240-residue polypeptide: Bidirectional sugar transporter SWEET5 (240 aa).

At 1–9 (MTDPHTART) the chain is on the extracellular side. A helical membrane pass occupies residues 10 to 30 (IVGIVGNVISFGLFCAPIPTM). The 86-residue stretch at 10–95 (IVGIVGNVIS…YVTIFFVFAT (86 aa)) folds into the MtN3/slv 1 domain. Over 31-45 (VKIWKMKSVSEFKPD) the chain is Cytoplasmic. The chain crosses the membrane as a helical span at residues 46–66 (PYVATVLNCMMWTFYGLPFVQ). The Extracellular segment spans residues 67-72 (PDSLLV). A helical membrane pass occupies residues 73–93 (ITINGTGLFMELVYVTIFFVF). Residues 94 to 103 (ATSPVRRKIT) are Cytoplasmic-facing. The helical transmembrane segment at 104–124 (IAMVIEVIFMAVVIFCTMYFL) threads the bilayer. Over 125–131 (HTTKQRS) the chain is Extracellular. The chain crosses the membrane as a helical span at residues 132-152 (MLIGILCIVFNVIMYAAPLTV). A MtN3/slv 2 domain is found at 133–217 (LIGILCIVFN…IIYITYYKTT (85 aa)). Residues 153–165 (MKLVIKTKSVKYM) lie on the Cytoplasmic side of the membrane. The helical transmembrane segment at 166 to 186 (PFFLSLANFMNGVVWVIYACL) threads the bilayer. At 187-190 (KFDP) the chain is on the extracellular side. The chain crosses the membrane as a helical span at residues 191–211 (YILIPNGLGSLSGIIQLIIYI). The Cytoplasmic portion of the chain corresponds to 212–240 (TYYKTTNWNDDDEDKEKRYSNAGIELGQA).

Belongs to the SWEET sugar transporter family. As to quaternary structure, forms homooligomers and heterooligomers with SWEET6, SWEET8, SWEET9, SWEET11 and SWEET12.

It is found in the cell membrane. Mediates both low-affinity uptake and efflux of sugar across the plasma membrane. May play roles in nurturing the male gametophyte. This is Bidirectional sugar transporter SWEET5 from Arabidopsis thaliana (Mouse-ear cress).